A 158-amino-acid polypeptide reads, in one-letter code: Transcription elongation factor GreA (158 aa).

Belongs to the GreA/GreB family.

In terms of biological role, necessary for efficient RNA polymerase transcription elongation past template-encoded arresting sites. The arresting sites in DNA have the property of trapping a certain fraction of elongating RNA polymerases that pass through, resulting in locked ternary complexes. Cleavage of the nascent transcript by cleavage factors such as GreA or GreB allows the resumption of elongation from the new 3'terminus. GreA releases sequences of 2 to 3 nucleotides. The chain is Transcription elongation factor GreA from Pelobacter propionicus (strain DSM 2379 / NBRC 103807 / OttBd1).